A 97-amino-acid chain; its full sequence is UPF0235 protein AZOSEA09540 (97 aa).

This sequence belongs to the UPF0235 family.

This chain is UPF0235 protein AZOSEA09540, found in Aromatoleum aromaticum (strain DSM 19018 / LMG 30748 / EbN1) (Azoarcus sp. (strain EbN1)).